The following is a 1388-amino-acid chain: Peroxisomal ATPase PEX6 (1388 aa).

Disordered regions lie at residues 1 to 29, 169 to 192, 262 to 287, 302 to 323, and 346 to 365; these read MTTSELVPPPPARRSPRTRRRRQDKPALS, EGTFFRDRPNKGKGKAPAQPDTPE, RGQSAPAIPPNRSLNGVPEDDEDDTA, DAATTEMDTVTETEESDLSGVD, and TTASGVSTMQPGTPMTIGRG. Basic residues predominate over residues 14–23; sequence RSPRTRRRRQ. Positions 169–178 are enriched in basic and acidic residues; it reads EGTFFRDRPN. Acidic residues predominate over residues 310–323; the sequence is TVTETEESDLSGVD. Residues 346 to 358 are compositionally biased toward polar residues; it reads TTASGVSTMQPGT. Residue 1034–1041 coordinates ATP; that stretch reads GPPGTGKT. The segment at 1297-1388 is disordered; it reads GPPEKDRQQQ…GTASDDEGLY (92 aa). The segment covering 1319–1332 has biased composition (low complexity); the sequence is VSGSSVVSKGKGKA.

This sequence belongs to the AAA ATPase family. Interacts with PEX1; forming the PEX1-PEX6 AAA ATPase complex, which is composed of a heterohexamer formed by a trimer of PEX1-PEX6 dimers.

It localises to the cytoplasm. It is found in the cytosol. The protein resides in the peroxisome membrane. It catalyses the reaction ATP + H2O = ADP + phosphate + H(+). Component of the PEX1-PEX6 AAA ATPase complex, a protein dislocase complex that mediates the ATP-dependent extraction of the PEX5 receptor from peroxisomal membranes, an essential step for PEX5 recycling. Specifically recognizes PEX5 monoubiquitinated at 'Cys-6', and pulls it out of the peroxisome lumen through the PEX2-PEX10-PEX12 retrotranslocation channel. Extraction by the PEX1-PEX6 AAA ATPase complex is accompanied by unfolding of the TPR repeats and release of bound cargo from PEX5. This chain is Peroxisomal ATPase PEX6 (PEX6), found in Colletotrichum orbiculare (strain 104-T / ATCC 96160 / CBS 514.97 / LARS 414 / MAFF 240422) (Cucumber anthracnose fungus).